We begin with the raw amino-acid sequence, 122 residues long: Large ribosomal subunit protein uL14 (122 aa).

It belongs to the universal ribosomal protein uL14 family. Part of the 50S ribosomal subunit. Forms a cluster with proteins L3 and L19. In the 70S ribosome, L14 and L19 interact and together make contacts with the 16S rRNA in bridges B5 and B8.

Functionally, binds to 23S rRNA. Forms part of two intersubunit bridges in the 70S ribosome. This chain is Large ribosomal subunit protein uL14, found in Ruthia magnifica subsp. Calyptogena magnifica.